We begin with the raw amino-acid sequence, 245 residues long: Ribosomal RNA large subunit methyltransferase E (245 aa).

The segment at 1–26 is disordered; sequence MTKPPVGSNRSGRKLGQKVKKGKLKA. Residues 11 to 26 are compositionally biased toward basic residues; sequence SGRKLGQKVKKGKLKA. S-adenosyl-L-methionine is bound by residues G81, W83, D104, D120, and D144. K184 serves as the catalytic Proton acceptor.

It belongs to the class I-like SAM-binding methyltransferase superfamily. RNA methyltransferase RlmE family.

The protein localises to the cytoplasm. It carries out the reaction uridine(2552) in 23S rRNA + S-adenosyl-L-methionine = 2'-O-methyluridine(2552) in 23S rRNA + S-adenosyl-L-homocysteine + H(+). Functionally, specifically methylates the uridine in position 2552 of 23S rRNA at the 2'-O position of the ribose in the fully assembled 50S ribosomal subunit. This chain is Ribosomal RNA large subunit methyltransferase E, found in Sinorhizobium medicae (strain WSM419) (Ensifer medicae).